A 2280-amino-acid polypeptide reads, in one-letter code: Protein Ycf2 (2280 aa).

1634–1641 (GSIGTGRS) provides a ligand contact to ATP.

The protein belongs to the Ycf2 family.

It is found in the plastid. The protein localises to the chloroplast stroma. Functionally, probable ATPase of unknown function. Its presence in a non-photosynthetic plant (Epifagus virginiana) and experiments in tobacco indicate that it has an essential function which is probably not related to photosynthesis. This is Protein Ycf2 from Eucalyptus globulus subsp. globulus (Tasmanian blue gum).